A 280-amino-acid chain; its full sequence is Acetyl-coenzyme A carboxylase carboxyl transferase subunit beta (280 aa).

The CoA carboxyltransferase N-terminal domain maps to 28–280 (LFLACPYCGA…IVRLHTAEAE (253 aa)). Residues C32, C35, C50, and C53 each contribute to the Zn(2+) site. The C4-type zinc-finger motif lies at 32–53 (CPYCGAQMYNKQLGKYRVCAKC).

The protein belongs to the AccD/PCCB family. In terms of assembly, acetyl-CoA carboxylase is a heterohexamer composed of biotin carboxyl carrier protein (AccB), biotin carboxylase (AccC) and two subunits each of ACCase subunit alpha (AccA) and ACCase subunit beta (AccD). It depends on Zn(2+) as a cofactor.

The protein localises to the cytoplasm. It catalyses the reaction N(6)-carboxybiotinyl-L-lysyl-[protein] + acetyl-CoA = N(6)-biotinyl-L-lysyl-[protein] + malonyl-CoA. It functions in the pathway lipid metabolism; malonyl-CoA biosynthesis; malonyl-CoA from acetyl-CoA: step 1/1. Its function is as follows. Component of the acetyl coenzyme A carboxylase (ACC) complex. Biotin carboxylase (BC) catalyzes the carboxylation of biotin on its carrier protein (BCCP) and then the CO(2) group is transferred by the transcarboxylase to acetyl-CoA to form malonyl-CoA. The polypeptide is Acetyl-coenzyme A carboxylase carboxyl transferase subunit beta (Leuconostoc mesenteroides subsp. mesenteroides (strain ATCC 8293 / DSM 20343 / BCRC 11652 / CCM 1803 / JCM 6124 / NCDO 523 / NBRC 100496 / NCIMB 8023 / NCTC 12954 / NRRL B-1118 / 37Y)).